Here is a 355-residue protein sequence, read N- to C-terminus: UDP-3-O-acylglucosamine N-acyltransferase (355 aa).

Residue histidine 248 is the Proton acceptor of the active site.

The protein belongs to the transferase hexapeptide repeat family. LpxD subfamily. As to quaternary structure, homotrimer.

The enzyme catalyses a UDP-3-O-[(3R)-3-hydroxyacyl]-alpha-D-glucosamine + a (3R)-hydroxyacyl-[ACP] = a UDP-2-N,3-O-bis[(3R)-3-hydroxyacyl]-alpha-D-glucosamine + holo-[ACP] + H(+). It participates in bacterial outer membrane biogenesis; LPS lipid A biosynthesis. Its function is as follows. Catalyzes the N-acylation of UDP-3-O-acylglucosamine using 3-hydroxyacyl-ACP as the acyl donor. Is involved in the biosynthesis of lipid A, a phosphorylated glycolipid that anchors the lipopolysaccharide to the outer membrane of the cell. The polypeptide is UDP-3-O-acylglucosamine N-acyltransferase (Syntrophobacter fumaroxidans (strain DSM 10017 / MPOB)).